Reading from the N-terminus, the 347-residue chain is NADH-ubiquinone oxidoreductase chain 2 (347 aa).

The next 11 membrane-spanning stretches (helical) occupy residues 3-23 (PPIF…VMTS), 25-45 (HWML…PILM), 59-79 (YFLT…INLL), 96-116 (ILMT…FWVP), 122-142 (IPLS…LSVL), 149-169 (INPN…GWGG), 178-198 (ILAY…LYNP), 201-221 (MILN…LFML), 237-257 (MPLI…LPPL), 274-294 (EMII…YFYM), and 325-345 (FLPP…MISI).

The protein belongs to the complex I subunit 2 family. In terms of assembly, core subunit of respiratory chain NADH dehydrogenase (Complex I) which is composed of 45 different subunits. Interacts with TMEM242.

It localises to the mitochondrion inner membrane. The enzyme catalyses a ubiquinone + NADH + 5 H(+)(in) = a ubiquinol + NAD(+) + 4 H(+)(out). Its function is as follows. Core subunit of the mitochondrial membrane respiratory chain NADH dehydrogenase (Complex I) which catalyzes electron transfer from NADH through the respiratory chain, using ubiquinone as an electron acceptor. Essential for the catalytic activity and assembly of complex I. This chain is NADH-ubiquinone oxidoreductase chain 2, found in Genetta servalina (Servaline genet).